Reading from the N-terminus, the 195-residue chain is MAFVLSLRMALVLVSYCPGGSLGCYLSRRPTLDVRENLRLLDRMNRLSPHSCQQDRKDFGLPQEMVEGDQLQKDQALSVLYEMLQQRFNLFHTEHSCAAWNTTLLEQLRTGLHQQLEDLDTCRGPVMGEKDSELGKMDPIVTVKKYFQGIYDYLQEKGYSDCAWEIVRVEMMRALTSSTTLQKRLKKTGGDLNSP.

Positions 1–23 (MAFVLSLRMALVLVSYCPGGSLG) are cleaved as a signal peptide. Intrachain disulfides connect Cys-24–Cys-122 and Cys-52–Cys-162. N-linked (GlcNAc...) asparagine glycosylation is present at Asn-101.

Belongs to the alpha/beta interferon family. IFN-alphaII subfamily. Constitutively and exclusively expressed in the mononuclear cells of the extraembryonic trophectoderm.

It localises to the secreted. Its function is as follows. Paracrine hormone primarily responsible for maternal recognition of pregnancy. Interacts with endometrial receptors, probably type I interferon receptors, and blocks estrogen receptor expression, preventing the estrogen-induced increase in oxytocin receptor expression in the endometrium. This results in the suppression of the pulsatile endometrial release of the luteolytic hormone prostaglandin F2-alpha, hindering the regression of the corpus luteum (luteolysis) and therefore a return to ovarian cyclicity. This, and a possible direct effect of IFN-tau on prostaglandin synthesis, leads in turn to continued ovarian progesterone secretion, which stimulates the secretion by the endometrium of the nutrients required for the growth of the conceptus. In summary, displays particularly high antiviral and antiproliferative potency concurrently with particular weak cytotoxicity, high antiluteolytic activity and immunomodulatory properties. In contrast with other IFNs, IFN-tau is not virally inducible. The polypeptide is Interferon tau (IFNT) (Ovibos moschatus (Muskox)).